Consider the following 864-residue polypeptide: Probable LRR receptor-like serine/threonine-protein kinase At1g07550 (864 aa).

Positions 1–23 (MDTCTRLLFAACATLSILHLVQS) are cleaved as a signal peptide. Residues 24–507 (QNQQGFISLD…SCGTRFPTAA (484 aa)) lie on the Extracellular side of the membrane. N-linked (GlcNAc...) asparagine glycosylation is found at N49, N229, N256, N289, N432, N445, and N464. LRR repeat units follow at residues 411–434 (RIVK…QNLT), 435–457 (QLQE…LAKM), and 459–480 (YLLV…ALLD). The chain crosses the membrane as a helical span at residues 508-528 (VAASVSAVAIIILVLVLIFVL). At 529 to 864 (RRRKPSAGKV…VDTEINPKAR (336 aa)) the chain is on the cytoplasmic side. T551 is modified (phosphothreonine). Positions 560–831 (NNFQVVIGKG…QVVHVLNECL (272 aa)) constitute a Protein kinase domain. ATP is bound by residues 566–574 (IGKGGFGVV) and K587. A Phosphotyrosine modification is found at Y632. D684 acts as the Proton acceptor in catalysis. T718 and T723 each carry phosphothreonine. Y731 carries the post-translational modification Phosphotyrosine.

Belongs to the protein kinase superfamily. Ser/Thr protein kinase family.

It localises to the membrane. The catalysed reaction is L-seryl-[protein] + ATP = O-phospho-L-seryl-[protein] + ADP + H(+). It carries out the reaction L-threonyl-[protein] + ATP = O-phospho-L-threonyl-[protein] + ADP + H(+). The chain is Probable LRR receptor-like serine/threonine-protein kinase At1g07550 from Arabidopsis thaliana (Mouse-ear cress).